The following is a 367-amino-acid chain: Beta sliding clamp (367 aa).

Belongs to the beta sliding clamp family. Forms a ring-shaped head-to-tail homodimer around DNA which binds and tethers DNA polymerases and other proteins to the DNA. The DNA replisome complex has a single clamp-loading complex (3 tau and 1 each of delta, delta', psi and chi subunits) which binds 3 Pol III cores (1 core on the leading strand and 2 on the lagging strand) each with a beta sliding clamp dimer. Additional proteins in the replisome are other copies of gamma, psi and chi, Ssb, DNA helicase and RNA primase.

The protein resides in the cytoplasm. Its function is as follows. Confers DNA tethering and processivity to DNA polymerases and other proteins. Acts as a clamp, forming a ring around DNA (a reaction catalyzed by the clamp-loading complex) which diffuses in an ATP-independent manner freely and bidirectionally along dsDNA. Initially characterized for its ability to contact the catalytic subunit of DNA polymerase III (Pol III), a complex, multichain enzyme responsible for most of the replicative synthesis in bacteria; Pol III exhibits 3'-5' exonuclease proofreading activity. The beta chain is required for initiation of replication as well as for processivity of DNA replication. The chain is Beta sliding clamp (dnaN) from Proteus mirabilis.